A 171-amino-acid polypeptide reads, in one-letter code: RxLR effector protein CRE7 (171 aa).

The signal sequence occupies residues 1 to 23 (MRAIAILLAVVATIFASLHGVSA). The RxLR-dEER motif lies at 46–59 (RRLRQTGDASDEER).

Belongs to the RxLR effector family.

Its subcellular location is the secreted. It localises to the host cell. In terms of biological role, effector that is involved in host plant infection. Contributes to virulence during the early infection stage, by inhibiting plant defense responses induced by both PAMP-triggered immunity (PTI) and effector-triggered immunity (ETI). The chain is RxLR effector protein CRE7 from Phytophthora infestans (strain T30-4) (Potato late blight agent).